A 344-amino-acid chain; its full sequence is L-rhamnose-proton symporter (344 aa).

Helical transmembrane passes span 4–24, 38–58, 68–88, 101–121, 137–157, 175–195, 214–234, 259–279, 290–310, and 323–343; these read AITM…CFYA, WSVG…ALLL, FSLS…IGNI, MGIG…TPII, TLLG…AGQL, LVLA…MNAA, LPSY…FCFI, VLLS…YAWG, ISWM…GLVL, and VLSL…IGMA.

This sequence belongs to the L-rhamnose transporter (TC 2.A.7.6) family.

The protein localises to the cell inner membrane. The enzyme catalyses L-rhamnopyranose(in) + H(+)(in) = L-rhamnopyranose(out) + H(+)(out). Its function is as follows. Uptake of L-rhamnose across the cytoplasmic membrane with the concomitant transport of protons into the cell (symport system). The protein is L-rhamnose-proton symporter of Escherichia coli (strain 55989 / EAEC).